The primary structure comprises 484 residues: Fumigaclavine B O-acetyltransferase ifgI (484 aa).

Belongs to the fumigaclavine B O-acetyltransferase family. As to quaternary structure, monomer.

It carries out the reaction fumigaclavine B + acetyl-CoA = fumigaclavine A + CoA. It functions in the pathway alkaloid biosynthesis; ergot alkaloid biosynthesis. Its function is as follows. Fumigaclavine B O-acetyltransferase; part of the gene cluster that mediates the biosynthesis of isofumigaclavines, fungal ergot alkaloids. The tryptophan dimethylallyltransferase ifgA catalyzes the first step of ergot alkaloid biosynthesis by condensing dimethylallyl diphosphate (DMAP) and tryptophan to form 4-dimethylallyl-L-tryptophan. The second step is catalyzed by the methyltransferase ifgB that methylates 4-dimethylallyl-L-tryptophan in the presence of S-adenosyl-L-methionine, resulting in the formation of N-methyl-dimethylallyl-L-tryptophan. The catalase ifgD and the FAD-dependent oxidoreductase ifgC then transform N-methyl-dimethylallyl-L-tryptophan to chanoclavine-I which is further oxidized by ifgE in the presence of NAD(+), resulting in the formation of chanoclavine-I aldehyde. The chanoclavine-I aldehyde reductases ifgG and/or fgaOx3 reduce chanoclavine-I aldehyde to dihydrochanoclavine-I aldehyde that spontaneously dehydrates to form 6,8-dimethyl-6,7-didehydroergoline. The festuclavine dehydrogenases ifgF1 and/or ifgF2 then catalyze the reduction of 6,8-dimethyl-6,7-didehydroergoline to form festuclavine. Hydrolysis of festuclavine by a yet undetermined cytochrome P450 monooxygenase (called ifgH) then leads to the formation of isofumigaclavine B which is in turn acetylated by ifgI to isofumigaclavine A. Penicillium roqueforti has interestingly at least two sets of genes for the consumption of chanoclavine-I aldehyde on three different loci, the OYEs ifgG/fgaOx3 and the festuclavine synthase homologs ifgF1/ifgF2. The reason for the duplication of these genes is unclear, probably to ensure the conversion of chanoclavine-I aldehyde by differential gene expression under various environmental conditions. This chain is Fumigaclavine B O-acetyltransferase ifgI, found in Penicillium roqueforti (strain FM164).